Consider the following 795-residue polypeptide: Phenylalanine--tRNA ligase beta subunit (795 aa).

The tRNA-binding domain maps to 39–148 (AGSFHGVVVG…ADAPIGTDIR (110 aa)). In terms of domain architecture, B5 spans 401–476 (PKRATITLRR…RVYGYNNIPD (76 aa)). Residues D454, D460, E463, and E464 each contribute to the Mg(2+) site. Residues 701 to 794 (SRFPANRRDI…LKERFQASLR (94 aa)) form the FDX-ACB domain.

The protein belongs to the phenylalanyl-tRNA synthetase beta subunit family. Type 1 subfamily. As to quaternary structure, tetramer of two alpha and two beta subunits. It depends on Mg(2+) as a cofactor.

The protein resides in the cytoplasm. It catalyses the reaction tRNA(Phe) + L-phenylalanine + ATP = L-phenylalanyl-tRNA(Phe) + AMP + diphosphate + H(+). The protein is Phenylalanine--tRNA ligase beta subunit (pheT) of Escherichia coli (strain K12).